The primary structure comprises 304 residues: Xylanase inhibitor protein 1 (304 aa).

An N-terminal signal peptide occupies residues 1-29 (MVALGRRSWLVPLAMVLAVSSCLAGPAMA). Residues 34-304 (GQMTVFWGRN…GYGKTVKYWA (271 aa)) form the GH18 domain. Disulfide bonds link Cys-53-Cys-93 and Cys-190-Cys-219.

Belongs to the glycosyl hydrolase 18 family. Xylanase inhibitor subfamily. In terms of assembly, binds to fungal GH11 xylanases. As to expression, constitutively expressed in shoots.

It localises to the secreted. In terms of biological role, fungal xylanase inhibitor. Possesses competitive inhibiting activity against fungal endo-1,4-beta-D-xylanases belonging to glycoside hydrolase family 11 (GH11). May function in plant defense against secreted fungal pathogen xylanases. Is similar to class III chitinases, but does not exhibit chitinase activity. This chain is Xylanase inhibitor protein 1, found in Oryza sativa subsp. japonica (Rice).